The sequence spans 419 residues: Synaptic vesicle membrane protein VAT-1 homolog-like (419 aa).

Over residues 1–25 the composition is skewed to basic and acidic residues; the sequence is MAKEGVEKAEETEQMIEKEAGKEPA. Disordered regions lie at residues 1 to 36 and 384 to 419; these read MAKEGVEKAEETEQMIEKEAGKEPAEGGGGDGSHRL and PTPLMANDSTETSEAGEEEEDHEGDSENKERMPFIQ. At serine 392 the chain carries Phosphoserine. A phosphothreonine mark is found at threonine 393 and threonine 395. Serine 396 carries the post-translational modification Phosphoserine. Residues 397–407 show a composition bias toward acidic residues; the sequence is EAGEEEEDHEG. Positions 408 to 419 are enriched in basic and acidic residues; the sequence is DSENKERMPFIQ.

Belongs to the zinc-containing alcohol dehydrogenase family. Quinone oxidoreductase subfamily. Detected in skin fibroblasts.

In Homo sapiens (Human), this protein is Synaptic vesicle membrane protein VAT-1 homolog-like (VAT1L).